The primary structure comprises 447 residues: Argininosuccinate synthase (447 aa).

ATP is bound by residues 20–28 (AFSGGLDTS) and Ala-46. Tyr-102 contacts L-citrulline. Residues Gly-132 and Thr-134 each coordinate ATP. Residues Thr-134, Asn-138, and Asp-139 each contribute to the L-aspartate site. Asn-138 is an L-citrulline binding site. Asp-139 contacts ATP. The L-citrulline site is built by Arg-142 and Ser-195. Asp-197 is a binding site for ATP. The L-citrulline site is built by Thr-204, Glu-206, and Glu-283.

The protein belongs to the argininosuccinate synthase family. Type 2 subfamily. In terms of assembly, homotetramer.

It localises to the cytoplasm. It catalyses the reaction L-citrulline + L-aspartate + ATP = 2-(N(omega)-L-arginino)succinate + AMP + diphosphate + H(+). The protein operates within amino-acid biosynthesis; L-arginine biosynthesis; L-arginine from L-ornithine and carbamoyl phosphate: step 2/3. The chain is Argininosuccinate synthase from Neisseria meningitidis serogroup C / serotype 2a (strain ATCC 700532 / DSM 15464 / FAM18).